Consider the following 146-residue polypeptide: uncharacterized protein (146 aa).

This is an uncharacterized protein from Escherichia coli (strain K12).